Reading from the N-terminus, the 399-residue chain is Methylthioribose kinase (399 aa).

Residues Asn-40, Lys-57, and 111–113 (EDL) contribute to the ATP site. Asp-229 lines the substrate pocket. Residue 246–248 (DAE) coordinates ATP. Arg-344 lines the substrate pocket.

It belongs to the methylthioribose kinase family. As to quaternary structure, homodimer.

It carries out the reaction 5-(methylsulfanyl)-D-ribose + ATP = 5-(methylsulfanyl)-alpha-D-ribose 1-phosphate + ADP + H(+). Its pathway is amino-acid biosynthesis; L-methionine biosynthesis via salvage pathway; S-methyl-5-thio-alpha-D-ribose 1-phosphate from S-methyl-5'-thioadenosine (hydrolase route): step 2/2. Functionally, catalyzes the phosphorylation of methylthioribose into methylthioribose-1-phosphate. The protein is Methylthioribose kinase of Erwinia tasmaniensis (strain DSM 17950 / CFBP 7177 / CIP 109463 / NCPPB 4357 / Et1/99).